A 458-amino-acid chain; its full sequence is Zinc finger protein 19 (458 aa).

In terms of domain architecture, KRAB spans Val-14 to Arg-85. 9 consecutive C2H2-type zinc fingers follow at residues Phe-161 to His-183, Phe-189 to His-211, Tyr-217 to His-239, Tyr-245 to His-267, Tyr-273 to His-295, Tyr-301 to His-323, Tyr-329 to His-351, Phe-357 to His-379, and Tyr-385 to His-407. Residues Tyr-413–His-433 form a C2H2-type 10; atypical zinc finger.

It belongs to the krueppel C2H2-type zinc-finger protein family.

The protein localises to the nucleus. In terms of biological role, may be involved in transcriptional regulation. The chain is Zinc finger protein 19 (ZNF19) from Homo sapiens (Human).